Here is a 435-residue protein sequence, read N- to C-terminus: UPF0053 protein Rv2366c (435 aa).

Residues 1–185 (MTGYYQLLGS…QQRGVVAADE (185 aa)) form the CNNM transmembrane domain. Helical transmembrane passes span 7–27 (LLGS…DAAI) and 89–109 (VWGL…VVGV). CBS domains follow at residues 204–267 (MVPR…GRET) and 272–329 (VMRP…IADE).

This sequence belongs to the UPF0053 family.

It localises to the cell membrane. In Mycobacterium tuberculosis (strain ATCC 25618 / H37Rv), this protein is UPF0053 protein Rv2366c.